The primary structure comprises 1378 residues: Macrophage-stimulating protein receptor (1378 aa).

An N-terminal signal peptide occupies residues 1–23; it reads MGLPLPLLQSSLLLMLLLRLSAA. At 25 to 960 the chain is on the extracellular side; it reads TNLNWQCPRI…RSSPGRASQR (936 aa). The Sema domain maps to 33–524; the sequence is RIPYAASRDF…SGDQVFKVPI (492 aa). A glycan (N-linked (GlcNAc...) asparagine) is linked at Asn91. Disulfide bonds link Cys102–Cys105, Cys108–Cys163, Cys136–Cys144, Cys175–Cys178, Cys301–Cys368, Cys386–Cys409, and Cys387–Cys424. 3 N-linked (GlcNAc...) asparagine glycosylation sites follow: Asn391, Asn460, and Asn490. 4 disulfides stabilise this stretch: Cys529–Cys547, Cys535–Cys569, Cys538–Cys554, and Cys550–Cys560. IPT/TIG domains lie at 571–673, 686–769, and 772–864; these read PEIS…FRVE, PVLT…FHYK, and PIVL…FRFL. 4 N-linked (GlcNAc...) asparagine glycosylation sites follow: Asn656, Asn722, Asn845, and Asn901. A helical transmembrane segment spans residues 961-981; the sequence is ILLIALLVLILLVAVLAVALI. Topologically, residues 982 to 1378 are cytoplasmic; sequence FNSRRRKKQL…RPLSEPPLPT (397 aa). Positions 1002 to 1026 are disordered; sequence SDINDTASGAPNHEESSESRDGTSV. Positions 1013–1022 are enriched in basic and acidic residues; that stretch reads NHEESSESRD. The Protein kinase domain maps to 1059-1322; that stretch reads IHTDQVIGKG…ALVLEVKQVV (264 aa). Residues 1065–1073, Lys1091, and 1138–1141 each bind ATP; these read IGKGHFGVV and LPYM. Asp1185 acts as the Proton acceptor in catalysis. Arg1189 contacts ATP. Residues Tyr1215, Tyr1216, Tyr1330, and Tyr1337 each carry the phosphotyrosine; by autocatalysis modification. A disordered region spans residues 1347 to 1378; that stretch reads DGSVPPEQVQPSPQHCRSTSKPRPLSEPPLPT. Low complexity predominate over residues 1349–1360; the sequence is SVPPEQVQPSPQ.

It belongs to the protein kinase superfamily. Tyr protein kinase family. In terms of assembly, heterodimer of an alpha chain and a beta chain which are disulfide linked. Binds PLXNB1. Associates with and is negatively regulated by HYAL2. Interacts when phosphorylated with downstream effectors including PIK3R1, PCLG1, GRB2 and GAB1. Interacts with integrin beta1/ITGB1 in a ligand-independent fashion. Isoform sf-Stk forms covalent heterodimers with friend spleen focus-forming virus (FSFFV) gp55. Post-translationally, proteolytic processing yields the two subunits. Autophosphorylated in response to ligand binding on Tyr-1215 and Tyr-1216 in the kinase domain leading to further phosphorylation of Tyr-1330 and Tyr-1337 in the C-terminal multifunctional docking site. In terms of processing, ubiquitinated. Ubiquitination by CBL regulates the receptor stability and activity through proteasomal degradation. Post-translationally, O-mannosylation of IPT/TIG domains on Thr or Ser residues by TMEM260 is required for protein maturation. O-mannosylated residues are composed of single mannose glycans that are not elongated or modified. Expressed in liver, skin, lung, brain, testis and kidney.

The protein resides in the membrane. It catalyses the reaction L-tyrosyl-[protein] + ATP = O-phospho-L-tyrosyl-[protein] + ADP + H(+). In its inactive state, the C-terminal tail interacts with the catalytic domain and inhibits the kinase activity. Upon ligand binding, the C-terminal tail is displaced and becomes phosphorylated, thus increasing the kinase activity. Its function is as follows. Receptor tyrosine kinase that transduces signals from the extracellular matrix into the cytoplasm by binding to MST1 ligand. Regulates many physiological processes including cell survival, migration and differentiation. Ligand binding at the cell surface induces autophosphorylation of RON on its intracellular domain that provides docking sites for downstream signaling molecules. Following activation by ligand, interacts with the PI3-kinase subunit PIK3R1, PLCG1 or the adapter GAB1. Recruitment of these downstream effectors by RON leads to the activation of several signaling cascades including the RAS-ERK, PI3 kinase-AKT, or PLCgamma-PKC. RON signaling activates the wound healing response by promoting epithelial cell migration, proliferation as well as survival at the wound site. Also plays a role in the innate immune response by regulating the migration and phagocytic activity of macrophages. Alternatively, RON can also promote signals such as cell migration and proliferation in response to growth factors other than MST1 ligand. The sequence is that of Macrophage-stimulating protein receptor (Mst1r) from Mus musculus (Mouse).